A 91-amino-acid polypeptide reads, in one-letter code: Heat shock protein 30E (91 aa).

Residues 62–91 (RDQIRQPGAPESEGTSPNTGKDGKDPGNSL) form a disordered region. Basic and acidic residues predominate over residues 82-91 (KDGKDPGNSL).

Belongs to the small heat shock protein (HSP20) family.

This chain is Heat shock protein 30E (hsp30e), found in Xenopus laevis (African clawed frog).